The sequence spans 398 residues: Sex hormone-binding globulin (398 aa).

An N-terminal signal peptide occupies residues 1–31 (MATPPLVPLLLLLLLLLPHAHHRLALRSVLA). Laminin G-like domains lie at 41-213 (VHLI…RRSC) and 220-386 (GIFF…THSC). Intrachain disulfides connect Cys189-Cys213 and Cys358-Cys386. Asn376 and Asn392 each carry an N-linked (GlcNAc...) asparagine glycan.

Homodimer.

The protein resides in the secreted. Its function is as follows. Functions as an androgen transport protein, but may also be involved in receptor mediated processes. Each dimer binds one molecule of steroid. Specific for 5-alpha-dihydrotestosterone, testosterone, and 17-beta-estradiol. Regulates the plasma metabolic clearance rate of steroid hormones by controlling their plasma concentration. This chain is Sex hormone-binding globulin (SHBG), found in Oryctolagus cuniculus (Rabbit).